The following is a 324-amino-acid chain: Ribonucleoside-diphosphate reductase subunit beta nrdF2 (324 aa).

The Fe cation site is built by glutamate 103 and histidine 106. Residue tyrosine 110 is part of the active site. Residues glutamate 163, glutamate 197, and histidine 200 each contribute to the Fe cation site.

It belongs to the ribonucleoside diphosphate reductase small chain family. Tetramer of two alpha and two beta subunits. Requires Fe cation as cofactor.

It carries out the reaction a 2'-deoxyribonucleoside 5'-diphosphate + [thioredoxin]-disulfide + H2O = a ribonucleoside 5'-diphosphate + [thioredoxin]-dithiol. Functionally, provides the precursors necessary for DNA synthesis. Catalyzes the biosynthesis of deoxyribonucleotides from the corresponding ribonucleotides. This is Ribonucleoside-diphosphate reductase subunit beta nrdF2 (nrdF2) from Mycobacterium tuberculosis (strain CDC 1551 / Oshkosh).